A 373-amino-acid chain; its full sequence is Chemerin-like receptor 1 (373 aa).

Residues 1–41 (MRMEDEDYNTSISYGDEYPDYLDSIVVLEDLSPLEARVTRI) are Extracellular-facing. Asparagine 9 carries N-linked (GlcNAc...) asparagine glycosylation. A helical transmembrane segment spans residues 42-64 (FLVVVYSIVCFLGILGNGLVIII). Residues 65–75 (ATFKMKKTVNM) are Cytoplasmic-facing. Residues 76–97 (VWFLNLAVADFLFNVFLPIHIT) form a helical membrane-spanning segment. Over 98–114 (YAAMDYHWVFGTAMCKI) the chain is Extracellular. Cysteine 112 and cysteine 189 are disulfide-bonded. The helical transmembrane segment at 115–135 (SNFLLIHNMFTSVFLLTIISS) threads the bilayer. Residues 136-154 (DRCISVLLPVWSQNHRSVR) are Cytoplasmic-facing. Residues 155-176 (LAYMACMVIWVLAFFLSSPSLV) form a helical membrane-spanning segment. The Extracellular portion of the chain corresponds to 177–224 (FRDTANLHGKISCFNNFSLSTPGSSSWPTHSQMDPVGYSRHMVVTVTR). Asparagine 192 carries N-linked (GlcNAc...) asparagine glycosylation. A helical transmembrane segment spans residues 225 to 245 (FLCGFLVPVLIITACYLTIVC). Residues 246–261 (KLQRNRLAKTKKPFKI) are Cytoplasmic-facing. The chain crosses the membrane as a helical span at residues 262–282 (IVTIIITFFLCWCPYHTLNLL). Over 283-300 (ELHHTAMPGSVFSLGLPL) the chain is Extracellular. The helical transmembrane segment at 301–320 (ATALAIANSCMNPILYVFMG) threads the bilayer. Residues 321–373 (QDFKKFKVALFSRLVNALSEDTGHSSYPSHRSFTKMSSMNERTSMNERETGML) lie on the Cytoplasmic side of the membrane. Position 339 is a phosphoserine (serine 339). The tract at residues 341 to 373 (DTGHSSYPSHRSFTKMSSMNERTSMNERETGML) is disordered. Position 342 is a phosphothreonine (threonine 342). The segment covering 344 to 363 (HSSYPSHRSFTKMSSMNERT) has biased composition (polar residues). Residues serine 349, serine 352, and serine 358 each carry the phosphoserine modification. The span at 364–373 (SMNERETGML) shows a compositional bias: basic and acidic residues.

Belongs to the chemokine-like receptor (CMKLR) family. In terms of tissue distribution, prominently expressed in developing osseous and cartilaginous tissue. Also found in adult parathyroid glands. Expressed in cardiovascular system, brain, kidney, gastrointestinal tissues and myeloid tissues. Expressed in a broad array of tissues associated with hematopoietic and immune function including, spleen, thymus, appendix, lymph node, bone marrow and fetal liver. Among leukocyte populations abundant expression in monocyte-derived macrophage and immature dendritic cells (DCs). High expression in blood monocytes and low levels in polymorphonuclear cells and T-cells. Expressed on endothelial cells. Highly expressed in differentiating adipocytes.

The protein localises to the cell membrane. Receptor for the chemoattractant adipokine chemerin/RARRES2 and for the omega-3 fatty acid derived molecule resolvin E1. Interaction with RARRES2 initiates activation of G proteins G(i)/G(o) and beta-arrestin pathways inducing cellular responses via second messenger pathways such as intracellular calcium mobilization, phosphorylation of MAP kinases MAPK1/MAPK3 (ERK1/2), TYRO3, MAPK14/P38MAPK and PI3K leading to multifunctional effects, like reduction of immune responses, enhancing of adipogenesis and angionesis. Resolvin E1 down-regulates cytokine production in macrophages by reducing the activation of MAPK1/3 (ERK1/2) and NF-kappa-B. Positively regulates adipogenesis and adipocyte metabolism. Its function is as follows. (Microbial infection) Acts as a coreceptor for several SIV strains (SIVMAC316, SIVMAC239, SIVMACL7E-FR and SIVSM62A), as well as a primary HIV-1 strain (92UG024-2). The chain is Chemerin-like receptor 1 from Homo sapiens (Human).